A 251-amino-acid polypeptide reads, in one-letter code: MCYIEITKDNIEDNHICCALSTKQYEHAVNEKKRWLKARMDEGLVFYRLHERAKVFIEYLPANEAWVPINAPNFMYINCLWVSGRYKNNGHAKRLLDKCIADAKACGMDGIIHIAGKKKLPYLSDKHFFEHMGFTLQDEAAPYFQLMALTWNGLADSPAFKSQVKSDSINEKGITIYYTAQCPFAVGMINDLRELTEKKGVQFQSIQLSSKEEAQKSPAIWTTFSVFFDGRFVTHEIMSINKFEKLLNTLA.

Residues 4–152 (IEITKDNIED…YFQLMALTWN (149 aa)) enclose the N-acetyltransferase domain.

The protein belongs to the acetyltransferase family.

This is an uncharacterized protein from Bacillus subtilis (strain 168).